Here is a 418-residue protein sequence, read N- to C-terminus: 3-phosphoshikimate 1-carboxyvinyltransferase (418 aa).

3-phosphoshikimate is bound by residues Lys26, Ser27, and Arg31. Residue Lys26 participates in phosphoenolpyruvate binding. Phosphoenolpyruvate contacts are provided by Gly97 and Arg125. 3-phosphoshikimate is bound by residues Ser170, Ser171, Gln172, Asp297, Asn320, and Lys324. Residue Gln172 participates in phosphoenolpyruvate binding. The Proton acceptor role is filled by Asp297. Positions 328, 375, and 400 each coordinate phosphoenolpyruvate.

The protein belongs to the EPSP synthase family. In terms of assembly, monomer.

It is found in the cytoplasm. The catalysed reaction is 3-phosphoshikimate + phosphoenolpyruvate = 5-O-(1-carboxyvinyl)-3-phosphoshikimate + phosphate. It participates in metabolic intermediate biosynthesis; chorismate biosynthesis; chorismate from D-erythrose 4-phosphate and phosphoenolpyruvate: step 6/7. Functionally, catalyzes the transfer of the enolpyruvyl moiety of phosphoenolpyruvate (PEP) to the 5-hydroxyl of shikimate-3-phosphate (S3P) to produce enolpyruvyl shikimate-3-phosphate and inorganic phosphate. The chain is 3-phosphoshikimate 1-carboxyvinyltransferase from Pseudomonas syringae pv. syringae (strain B728a).